The primary structure comprises 602 residues: Oligoendopeptidase F, chromosomal (602 aa).

H388 is a Zn(2+) binding site. Residue E389 is part of the active site. Residues H392 and H395 each contribute to the Zn(2+) site.

It belongs to the peptidase M3B family. It depends on Zn(2+) as a cofactor.

Hydrolyzes peptides containing between 7 and 17 amino acids with a rather wide specificity. The chain is Oligoendopeptidase F, chromosomal (pepF2) from Lactococcus lactis subsp. cremoris (Streptococcus cremoris).